The chain runs to 412 residues: Sterol-4-alpha-carboxylate 3-dehydrogenase erg26, decarboxylating (412 aa).

Residues 17–23 (GGCGFLG), 89–90 (DI), and 111–113 (TAT) each bind NADP(+). Substrate-binding residues include S158 and Y188. NADP(+) contacts are provided by residues Y188, K192, and 217-220 (PAGI). K192 (proton donor) is an active-site residue.

This sequence belongs to the 3-beta-HSD family. Heterotetramer of erg25, erg26, erg27 and erg28. Erg28 acts as a scaffold to tether erg27 and other 4,4-demethylation-related enzymes, forming a demethylation enzyme complex, in the endoplasmic reticulum.

The protein localises to the endoplasmic reticulum membrane. It functions in the pathway steroid metabolism; ergosterol biosynthesis. In terms of biological role, sterol-C4-methyl oxidase; part of the third module of ergosterol biosynthesis pathway that includes the late steps of the pathway. Erg26 is a catalytic component of the C-4 demethylation complex that catalyzes the conversion of 4,4-dimethylfecosterol into fecosterol via 4-methylfecosterol. The third module or late pathway involves the ergosterol synthesis itself through consecutive reactions that mainly occur in the endoplasmic reticulum (ER) membrane. Firstly, the squalene synthase erg9 catalyzes the condensation of 2 farnesyl pyrophosphate moieties to form squalene, which is the precursor of all steroids. Squalene synthase is crucial for balancing the incorporation of farnesyl diphosphate (FPP) into sterol and nonsterol isoprene synthesis. Secondly, squalene is converted into lanosterol by the consecutive action of the squalene epoxidase erg1 and the lanosterol synthase erg7. Then, the delta(24)-sterol C-methyltransferase erg6 methylates lanosterol at C-24 to produce eburicol. Eburicol is the substrate of the sterol 14-alpha demethylase encoded by cyp51A and cyp51B, to yield 4,4,24-trimethyl ergosta-8,14,24(28)-trienol. The C-14 reductase erg24 then reduces the C14=C15 double bond which leads to 4,4-dimethylfecosterol. A sequence of further demethylations at C-4, involving the C-4 demethylation complex containing the C-4 methylsterol oxidases erg25A or erg25B, the sterol-4-alpha-carboxylate 3-dehydrogenase erg26 and the 3-keto-steroid reductase erg27, leads to the production of fecosterol via 4-methylfecosterol. The C-8 sterol isomerase erg2 then catalyzes the reaction which results in unsaturation at C-7 in the B ring of sterols and thus converts fecosterol to episterol. The sterol-C5-desaturase erg3B then catalyzes the introduction of a C-5 double bond in the B ring to produce 5-dehydroepisterol. The 2 other sterol-C5-desaturases, erg3A and erg3C, seem to be less important in ergosterol biosynthesis. The C-22 sterol desaturase erg5 further converts 5-dehydroepisterol into ergosta-5,7,22,24(28)-tetraen-3beta-ol by forming the C-22(23) double bond in the sterol side chain. Finally, ergosta-5,7,22,24(28)-tetraen-3beta-ol is substrate of the C-24(28) sterol reductases erg4A and erg4B to produce ergosterol. Possible alternative sterol biosynthetic pathways might exist from fecosterol to ergosterol, depending on the activities of the erg3 isoforms. The protein is Sterol-4-alpha-carboxylate 3-dehydrogenase erg26, decarboxylating of Aspergillus fumigatus (strain ATCC MYA-4609 / CBS 101355 / FGSC A1100 / Af293) (Neosartorya fumigata).